Consider the following 487-residue polypeptide: Arginine ADP-riboxanase CopC (487 aa).

A compositionally biased stretch (polar residues) spans 1–12; that stretch reads MRVENHSPSLSK. The interval 1–27 is disordered; that stretch reads MRVENHSPSLSKLNPPEAGSGDPTAIG. Positions 137, 138, 139, 143, 150, 152, 154, and 157 each coordinate NAD(+). Position 137 (H137) interacts with nicotinamide. 2 residues coordinate ADP-D-ribose: S139 and L143. ADP-D-ribose contacts are provided by A152, N154, L157, G166, N167, T168, and F183. N167 lines the NAD(+) pocket. An NAD(+)-binding site is contributed by F183. Nicotinamide-binding residues include F183, F184, H202, and F207. H202 serves as a coordination point for NAD(+). Residues F207 and D230 each coordinate ADP-D-ribose. Residues D230 and E325 each coordinate NAD(+). Residue E325 participates in nicotinamide binding. E325 is an active-site residue. ANK repeat units lie at residues 368–398 and 444–476; these read DAVT…EAGD and SGET…LLSE.

This sequence belongs to the OspC family. In terms of assembly, interacts with host calmodulin (CALM1, CALM2 and/or CALM3); specifically interacts with the apo form of calmodulin and calmodulin-binding is required to mediate arginine ADP-riboxanation of host caspases.

It localises to the secreted. It is found in the host cytoplasm. The catalysed reaction is L-arginyl-[protein] + NAD(+) = ADP-riboxanated L-argininyl-[protein] + nicotinamide + NH4(+) + H(+). Its activity is regulated as follows. Interaction with host calmodulin (CALM1, CALM2 and/or CALM3) is required to mediate arginine ADP-riboxanation of host caspases. In terms of biological role, ADP-riboxanase effector that inhibits host cell programmed cell death. Acts by mediating arginine ADP-riboxanation of host caspases (CASP3, CASP7, CASP8 and CASP9), blocking their processing and activation. ADP-riboxanation of host apoptotic caspases (CASP3, CASP7, CASP8 and CASP9) prevents their activation, thereby inhibiting host cell apoptosis. ADP-riboxanation of host CASP8 also inhibits host cell necroptosis. ADP-riboxanation of host CASP3 also abolishes pyroptosis by preventing its ability to cleave GSDME. May also able to inactivate CASP4/CASP11, blocking inhibiting LPS-induced pyroptosis; however this activity is unsure in vivo. ADP-riboxanation takes place in several steps: CopC first binds host caspases and NAD(+); NAD(+) is hydrolyzed to nicotinamide and ADP-D-ribose. CopC then transfers the ADP-D-ribose to the modified arginine of caspases and forms the ADP-D-ribose-deacylization on arginine, leading to deamination to remove one N-omega group on target arginine. In Chromobacterium violaceum (strain ATCC 12472 / DSM 30191 / JCM 1249 / CCUG 213 / NBRC 12614 / NCIMB 9131 / NCTC 9757 / MK), this protein is Arginine ADP-riboxanase CopC.